Here is a 262-residue protein sequence, read N- to C-terminus: Acyl-[acyl-carrier-protein]--UDP-N-acetylglucosamine O-acyltransferase (262 aa).

This sequence belongs to the transferase hexapeptide repeat family. LpxA subfamily. Homotrimer.

It is found in the cytoplasm. It catalyses the reaction a (3R)-hydroxyacyl-[ACP] + UDP-N-acetyl-alpha-D-glucosamine = a UDP-3-O-[(3R)-3-hydroxyacyl]-N-acetyl-alpha-D-glucosamine + holo-[ACP]. It participates in glycolipid biosynthesis; lipid IV(A) biosynthesis; lipid IV(A) from (3R)-3-hydroxytetradecanoyl-[acyl-carrier-protein] and UDP-N-acetyl-alpha-D-glucosamine: step 1/6. Its function is as follows. Involved in the biosynthesis of lipid A, a phosphorylated glycolipid that anchors the lipopolysaccharide to the outer membrane of the cell. The chain is Acyl-[acyl-carrier-protein]--UDP-N-acetylglucosamine O-acyltransferase from Salmonella dublin (strain CT_02021853).